An 851-amino-acid polypeptide reads, in one-letter code: ATP-dependent DNA helicase DDX31 (851 aa).

The segment at 1 to 196 (MAPDLASQRH…STSDRNQEER (196 aa)) is disordered. The short motif at 230–259 (AAFHELGLHPHLISTINTVLKMSSMTSVQK) is the Q motif element. One can recognise a Helicase ATP-binding domain in the interval 262 to 443 (IPVLLEGRDA…DISLHDPVSI (182 aa)). 275–282 (SQTGSGKT) contributes to the ATP binding site. Positions 388–391 (DEAD) match the DEAD box motif. Residues 480–659 (SLKQHVTVVP…VSEIKMEDIL (180 aa)) form the Helicase C-terminal domain. Disordered regions lie at residues 762–784 (KKRK…HSLA) and 804–851 (KQNA…SQKV). Arg828 is subject to Omega-N-methylarginine. A compositionally biased stretch (basic and acidic residues) spans 841 to 851 (VQRDSKTSQKV).

It belongs to the DEAD box helicase family. DDX31/DBP7 subfamily. In terms of assembly, interacts with NPM1; this interaction prevents interaction between NPM1 and HDM2. Weakly or undetectably expressed in normal organs. Up-regulated in renal cell carcinoma.

The protein resides in the nucleus. The protein localises to the nucleolus. It catalyses the reaction ATP + H2O = ADP + phosphate + H(+). Its function is as follows. May have DNA helicase activity and RNA helicase activity. Probably have ssDNA and RNA dependent ATPase activity. Plays a role in ribosome biogenesis and TP53/p53 regulation through its interaction with NPM1. The chain is ATP-dependent DNA helicase DDX31 from Homo sapiens (Human).